The primary structure comprises 507 residues: Zinc finger CCCH-type with G patch domain-containing protein (507 aa).

Met-1 carries the N-acetylmethionine modification. Positions 88 to 125 (PVDPGNDSKTVPGSEVQPTPTSSALEEEEEDPDLEDLS) are disordered. The span at 94–111 (DSKTVPGSEVQPTPTSSA) shows a compositional bias: polar residues. Residues 112-123 (LEEEEEDPDLED) show a composition bias toward acidic residues. The C3H1-type zinc finger occupies 170–196 (KSLKPCPFFLEGKCRFKENCRFSHGQL). The tract at residues 264–283 (LRTEATDSSDSDTGDASDSS) is disordered. Position 272 is a phosphoserine (Ser-272). Thr-276 is subject to Phosphothreonine. Positions 309–355 (TRGIGSKLLVKMGYEFGKGLGRHAEGRVEPIHAVVLPRGKSLDQCAE) constitute a G-patch domain. Ser-349 bears the Phosphoserine mark. Disordered regions lie at residues 359–389 (KKTK…PPRN) and 486–507 (AQEA…MTEF). A compositionally biased stretch (basic and acidic residues) spans 487-507 (QEADLQRKQRKADTHRKMTEF).

In terms of assembly, interacts with CHD4/Mi-2; the interaction is direct.

It is found in the nucleus. Functionally, transcription repressor that specifically binds the 5'-GGAG[GA]A[GA]A-3' consensus sequence. Represses transcription by recruiting the chromatin multiprotein complex NuRD to target promoters. Negatively regulates expression of EGFR, a gene involved in cell proliferation, survival and migration. Its ability to repress genes of the EGFR pathway suggest it may act as a tumor suppressor. This Rattus norvegicus (Rat) protein is Zinc finger CCCH-type with G patch domain-containing protein (Zgpat).